Reading from the N-terminus, the 121-residue chain is Flagellar protein FliT (121 aa).

The segment at 1–50 is required for homodimerization; that stretch reads MNNAPHLYFAWQQLVEKSQLMLRLATEEQWDELITSEMAYVNAVQEIAHL. Residues 60–98 are fliD binding; that stretch reads MQEQLRPMLRLILDNESKVKQLLQIRMDELAKLVGQSSV.

This sequence belongs to the FliT family. Homodimer. Interacts with FliD and FlhC.

Its subcellular location is the cytoplasm. It localises to the cytosol. Its function is as follows. Dual-function protein that regulates the transcription of class 2 flagellar operons and that also acts as an export chaperone for the filament-capping protein FliD. As a transcriptional regulator, acts as an anti-FlhDC factor; it directly binds FlhC, thus inhibiting the binding of the FlhC/FlhD complex to class 2 promoters, resulting in decreased expression of class 2 flagellar operons. As a chaperone, effects FliD transition to the membrane by preventing its premature polymerization, and by directing it to the export apparatus. This chain is Flagellar protein FliT, found in Escherichia coli (strain 55989 / EAEC).